A 482-amino-acid chain; its full sequence is Adenylosuccinate lyase (482 aa).

Substrate-binding positions include R14–Y15, R82–D84, and T108–S109. The Proton donor/acceptor role is filled by H156. Residue K196 forms a Glycyl lysine isopeptide (Lys-Gly) (interchain with G-Cter in ubiquitin) linkage. Residue Q238 coordinates substrate. S286 (proton donor/acceptor) is an active-site residue. R300, R326, S331, and R335 together coordinate substrate.

The protein belongs to the lyase 1 family. Adenylosuccinate lyase subfamily. Homotetramer. Residues from neighboring subunits contribute catalytic and substrate-binding residues to each active site.

The enzyme catalyses N(6)-(1,2-dicarboxyethyl)-AMP = fumarate + AMP. It catalyses the reaction (2S)-2-[5-amino-1-(5-phospho-beta-D-ribosyl)imidazole-4-carboxamido]succinate = 5-amino-1-(5-phospho-beta-D-ribosyl)imidazole-4-carboxamide + fumarate. It functions in the pathway purine metabolism; AMP biosynthesis via de novo pathway; AMP from IMP: step 2/2. Its pathway is purine metabolism; IMP biosynthesis via de novo pathway; 5-amino-1-(5-phospho-D-ribosyl)imidazole-4-carboxamide from 5-amino-1-(5-phospho-D-ribosyl)imidazole-4-carboxylate: step 2/2. This chain is Adenylosuccinate lyase (ADE13), found in Saccharomyces cerevisiae (strain ATCC 204508 / S288c) (Baker's yeast).